The sequence spans 134 residues: Protein dpy-30 homolog (134 aa).

The disordered stretch occupies residues 1–81 (MEAKTDAPIS…ETNNMPTRQY (81 aa)). Positions 31-68 (AQANPTAAPGAPPSGAIAVGQSTNPVAQQQQQPAVAKK) are enriched in low complexity. Over residues 71 to 81 (SETNNMPTRQY) the composition is skewed to polar residues.

It belongs to the dpy-30 family. As to quaternary structure, core component of several methyltransferase-containing complexes. Component of the SET1 complex, composed at least of the catalytic subunit Set1, wds/WDR5, Wdr82, Rbbp5, ash2, Cfp1/CXXC1, hcf and Dpy-30L1. Component of the MLL3/4 complex composed at least of the catalytic subunit trr, ash2, Rbbp5, Dpy-30L1, wds, hcf, ptip, Pa1, Utx, Lpt and Ncoa6. As to expression, expressed in larval brain, gonad, imaginal disk and salivary gland and in adult brain, testis, ovary and salivary gland.

The protein resides in the nucleus. In terms of biological role, component of the SET1 complex that specifically di- and trimethylates 'Lys-4' of histone H3 and of the MLL3/4 complex which also methylates histone H3 'Lys-4'. Inhibits MTF-1 transcription factor activity. This is Protein dpy-30 homolog from Drosophila melanogaster (Fruit fly).